We begin with the raw amino-acid sequence, 227 residues long: MKQLLKDSWWNQLKDEFDKPYYQELREMLKQEYSSQTIYPDSHDIFNALHYTPYEDVKAVILGQDPYHGPGQAHGLSFSVQPGVRQPPSLKNIFIELQDDIGCSVPNHGSLVSWAKQGVLLLNTVLTVRRGQANSHKGKGWERLTDRIIDVVNEREKPIVFILWGRHAQMKKERIDTSKHIIIESTHPSPFSARNGFFGSRPFSRTNAALEKMGEQPIDWCIPDLPQ.

Residue aspartate 65 is the Proton acceptor of the active site.

Belongs to the uracil-DNA glycosylase (UDG) superfamily. UNG family.

It is found in the cytoplasm. It catalyses the reaction Hydrolyzes single-stranded DNA or mismatched double-stranded DNA and polynucleotides, releasing free uracil.. Functionally, excises uracil residues from the DNA which can arise as a result of misincorporation of dUMP residues by DNA polymerase or due to deamination of cytosine. The sequence is that of Uracil-DNA glycosylase from Bacillus velezensis (strain DSM 23117 / BGSC 10A6 / LMG 26770 / FZB42) (Bacillus amyloliquefaciens subsp. plantarum).